The chain runs to 305 residues: Tyrosine recombinase XerD (305 aa).

The 83-residue stretch at 1-83 (MEFISQFLEM…TIKSYYEFLI (83 aa)) folds into the Core-binding (CB) domain. In terms of domain architecture, Tyr recombinase spans 104 to 298 (KLPEILSIDD…QTNHLKKALL (195 aa)). Residues Arg145, Lys175, His250, Arg253, and His276 contribute to the active site. Tyr285 serves as the catalytic O-(3'-phospho-DNA)-tyrosine intermediate.

The protein belongs to the 'phage' integrase family. XerD subfamily. In terms of assembly, forms a cyclic heterotetrameric complex composed of two molecules of XerC and two molecules of XerD.

Its subcellular location is the cytoplasm. Its function is as follows. Site-specific tyrosine recombinase, which acts by catalyzing the cutting and rejoining of the recombining DNA molecules. The XerC-XerD complex is essential to convert dimers of the bacterial chromosome into monomers to permit their segregation at cell division. It also contributes to the segregational stability of plasmids. The protein is Tyrosine recombinase XerD of Rickettsia bellii (strain RML369-C).